The chain runs to 181 residues: MSDTPAQTPEPSKKTPEPSGVDLARVALRAAKEQARARGDAAQQKRQARRGGLRSGARADGRDPMALGAAINRLLTERGWETPAAVGGVMGRWPQIVGEDLAKHCVPQRYDEDERVLTVQCDSTAWATQLRLLAPQLVARLNEDLGHGTVRLLKVQGPGGPARRYGPLRAPGSTGPGDTYG.

The segment covering 1-10 (MSDTPAQTPE) has biased composition (polar residues). 2 disordered regions span residues 1-64 (MSDT…GRDP) and 156-181 (QGPG…DTYG). Residues 30 to 39 (AAKEQARARG) are compositionally biased toward basic and acidic residues.

Belongs to the UPF0232 family.

In Streptomyces avermitilis (strain ATCC 31267 / DSM 46492 / JCM 5070 / NBRC 14893 / NCIMB 12804 / NRRL 8165 / MA-4680), this protein is UPF0232 protein SAV_4320.